A 172-amino-acid polypeptide reads, in one-letter code: Large ribosomal subunit protein uL10 (172 aa).

The protein belongs to the universal ribosomal protein uL10 family. As to quaternary structure, part of the ribosomal stalk of the 50S ribosomal subunit. The N-terminus interacts with L11 and the large rRNA to form the base of the stalk. The C-terminus forms an elongated spine to which L12 dimers bind in a sequential fashion forming a multimeric L10(L12)X complex.

In terms of biological role, forms part of the ribosomal stalk, playing a central role in the interaction of the ribosome with GTP-bound translation factors. The protein is Large ribosomal subunit protein uL10 of Francisella tularensis subsp. tularensis (strain FSC 198).